Consider the following 133-residue polypeptide: ATP synthase epsilon chain (133 aa).

Belongs to the ATPase epsilon chain family. In terms of assembly, F-type ATPases have 2 components, CF(1) - the catalytic core - and CF(0) - the membrane proton channel. CF(1) has five subunits: alpha(3), beta(3), gamma(1), delta(1), epsilon(1). CF(0) has three main subunits: a, b and c.

It is found in the cell membrane. Functionally, produces ATP from ADP in the presence of a proton gradient across the membrane. This is ATP synthase epsilon chain from Clostridium perfringens (strain SM101 / Type A).